We begin with the raw amino-acid sequence, 413 residues long: Peptide chain release factor 1, mitochondrial (413 aa).

An N5-methylglutamine modification is found at glutamine 287. Residues 335 to 363 are disordered; it reads RLEKEEKERKARKSQVSSTNRSDKIRTYN.

Belongs to the prokaryotic/mitochondrial release factor family. Post-translationally, methylation of glutamine in the GGQ triplet is conserved from bacteria to mammals. N5-methylated on Gln-287 by MTQ1.

Its subcellular location is the mitochondrion. Its function is as follows. Mitochondrial peptide chain release factor that directs the termination of translation in response to the peptide chain termination codons UAA and UAG. In Saccharomyces cerevisiae (strain ATCC 204508 / S288c) (Baker's yeast), this protein is Peptide chain release factor 1, mitochondrial (MRF1).